We begin with the raw amino-acid sequence, 190 residues long: MASPDAPINLTNQFLIAMPGMADPTFSGTVVYLCEHNERGALGLVINRPIDIDLATLFDKIDLKLEIHPLAEQPVYYGGPVQTERGFVLHDAMGSYSSSLTVPGGLEMTTSKDVLEAVARGGGPQRFILTLGYAGWSAGQLEEEIGRNGWLTVQADPEIIFNVPAEERFAAALRLLGINPAMLSGEAGHA.

Belongs to the UPF0301 (AlgH) family.

The chain is UPF0301 protein RSc0675 from Ralstonia nicotianae (strain ATCC BAA-1114 / GMI1000) (Ralstonia solanacearum).